Here is a 206-residue protein sequence, read N- to C-terminus: SIAELCKVLTTGPLNADTEVVVGCPAPYLTLARSQLPDSVGVAAQNCYKVAKGAFTGEISPAMLKDLNIGWVILGHSERRAIFGESDELIADKVAHALAEGLKVIACIGETLQEREAGQTEAVCFRQTKAIADKVKDWSNVVVAYEPVWAIGTGKTATPEQAQEVHVALRKWFTDNVSADVSASIRIQYGGSVTAANCRELAAKPD.

The active-site Electrophile is the H76. E146 serves as the catalytic Proton acceptor.

The protein belongs to the triosephosphate isomerase family. In terms of assembly, homodimer.

The enzyme catalyses D-glyceraldehyde 3-phosphate = dihydroxyacetone phosphate. Its pathway is carbohydrate biosynthesis; gluconeogenesis. It functions in the pathway carbohydrate degradation; glycolysis; D-glyceraldehyde 3-phosphate from glycerone phosphate: step 1/1. The protein is Triosephosphate isomerase (Tpi) of Aedes togoi (Mosquito).